The following is a 380-amino-acid chain: Chaperone protein DnaJ (380 aa).

In terms of domain architecture, J spans 5 to 70 (DYYEVLGVAK…QKRAAYDQYG (66 aa)). A CR-type zinc finger spans residues 140–218 (GYDTQIRVPS…CHGAGKVKET (79 aa)). Residues C153, C156, C170, C173, C192, C195, C206, and C209 each coordinate Zn(2+). 4 CXXCXGXG motif repeats span residues 153–160 (CEVCHGSG), 170–177 (CPTCSGSG), 192–199 (CPKCHGTG), and 206–213 (CGHCHGAG).

This sequence belongs to the DnaJ family. In terms of assembly, homodimer. The cofactor is Zn(2+).

Its subcellular location is the cytoplasm. Its function is as follows. Participates actively in the response to hyperosmotic and heat shock by preventing the aggregation of stress-denatured proteins and by disaggregating proteins, also in an autonomous, DnaK-independent fashion. Unfolded proteins bind initially to DnaJ; upon interaction with the DnaJ-bound protein, DnaK hydrolyzes its bound ATP, resulting in the formation of a stable complex. GrpE releases ADP from DnaK; ATP binding to DnaK triggers the release of the substrate protein, thus completing the reaction cycle. Several rounds of ATP-dependent interactions between DnaJ, DnaK and GrpE are required for fully efficient folding. Also involved, together with DnaK and GrpE, in the DNA replication of plasmids through activation of initiation proteins. This chain is Chaperone protein DnaJ, found in Paraburkholderia xenovorans (strain LB400).